The chain runs to 79 residues: Putative defensin-like protein 274 (79 aa).

An N-terminal signal peptide occupies residues 1 to 23; sequence MASSRFQLVALLVVFSLVISITA. Disulfide bonds link Cys35/Cys76, Cys41/Cys64, Cys47/Cys74, and Cys51/Cys75.

The protein belongs to the DEFL family.

The protein localises to the secreted. The polypeptide is Putative defensin-like protein 274 (Arabidopsis thaliana (Mouse-ear cress)).